The primary structure comprises 141 residues: Arsenate reductase (141 aa).

Catalysis depends on Cys-12, which acts as the Nucleophile; cysteine thioarsenate intermediate.

Belongs to the ArsC family. In terms of assembly, monomer in solution.

The catalysed reaction is [glutaredoxin]-dithiol + arsenate + glutathione + H(+) = glutathionyl-S-S-[glutaredoxin] + arsenite + H2O. Inhibited by the thiol reagents iodoacetate (IAA) and N-ethylmaleimide (NEM). Activity is rapidly inactivated by the histidine-modifying reagent diethylpyrocarbonate (DEPC). Involved in resistance to arsenate. Catalyzes the reduction of arsenate [As(V)] to arsenite [As(III)]. The resulting arsenite is then extruded from the cell via the ArsAB transport system. This Escherichia coli protein is Arsenate reductase.